Consider the following 147-residue polypeptide: 3-dehydroquinate dehydratase 1 (147 aa).

The active-site Proton acceptor is tyrosine 23. The substrate site is built by asparagine 75, histidine 81, and aspartate 88. Histidine 101 acts as the Proton donor in catalysis. Residues 102–103 (LS) and arginine 112 each bind substrate.

This sequence belongs to the type-II 3-dehydroquinase family. In terms of assembly, homododecamer.

The enzyme catalyses 3-dehydroquinate = 3-dehydroshikimate + H2O. It functions in the pathway metabolic intermediate biosynthesis; chorismate biosynthesis; chorismate from D-erythrose 4-phosphate and phosphoenolpyruvate: step 3/7. Catalyzes a trans-dehydration via an enolate intermediate. The chain is 3-dehydroquinate dehydratase 1 (aroQ1) from Pseudomonas aeruginosa (strain ATCC 15692 / DSM 22644 / CIP 104116 / JCM 14847 / LMG 12228 / 1C / PRS 101 / PAO1).